We begin with the raw amino-acid sequence, 156 residues long: 3-hydroxyacyl-[acyl-carrier-protein] dehydratase FabZ (156 aa).

His-57 is a catalytic residue.

The protein belongs to the thioester dehydratase family. FabZ subfamily.

The protein localises to the cytoplasm. The catalysed reaction is a (3R)-hydroxyacyl-[ACP] = a (2E)-enoyl-[ACP] + H2O. Involved in unsaturated fatty acids biosynthesis. Catalyzes the dehydration of short chain beta-hydroxyacyl-ACPs and long chain saturated and unsaturated beta-hydroxyacyl-ACPs. The polypeptide is 3-hydroxyacyl-[acyl-carrier-protein] dehydratase FabZ (Anaeromyxobacter dehalogenans (strain 2CP-C)).